The following is a 373-amino-acid chain: GTP cyclohydrolase 1 type 2 homolog (373 aa).

A divalent metal cation-binding residues include histidine 67, histidine 68, aspartate 106, histidine 333, and glutamate 336.

Belongs to the GTP cyclohydrolase I type 2/NIF3 family. Homohexamer.

The sequence is that of GTP cyclohydrolase 1 type 2 homolog from Listeria monocytogenes serovar 1/2a (strain ATCC BAA-679 / EGD-e).